Consider the following 251-residue polypeptide: Tritrans,polycis-undecaprenyl-diphosphate synthase (geranylgeranyl-diphosphate specific) (251 aa).

Residue D29 is part of the active site. D29 provides a ligand contact to Mg(2+). Substrate-binding positions include 30-33, F34, H46, and 74-76; these read GNRR and STE. N77 (proton acceptor) is an active-site residue. Substrate contacts are provided by residues F78, R80, R200, and 206–208; that span reads RLS.

The protein belongs to the UPP synthase family. Homodimer. Mg(2+) is required as a cofactor.

It catalyses the reaction geranylgeranyl diphosphate + 7 isopentenyl diphosphate = tri-trans,hepta-cis-undecaprenyl diphosphate + 7 diphosphate. Catalyzes the sequential condensation of isopentenyl diphosphate (IPP) with geranylgeranyl diphosphate (GGPP) to yield (2Z,6Z,10Z,14Z,18Z,22Z,26Z,30E,34E,38E)-undecaprenyl diphosphate (tritrans,heptacis-UPP). It is probably the precursor of glycosyl carrier lipids. The sequence is that of Tritrans,polycis-undecaprenyl-diphosphate synthase (geranylgeranyl-diphosphate specific) from Archaeoglobus fulgidus (strain ATCC 49558 / DSM 4304 / JCM 9628 / NBRC 100126 / VC-16).